Consider the following 1378-residue polypeptide: DNA-directed RNA polymerase subunit beta (1378 aa).

This sequence belongs to the RNA polymerase beta chain family. The RNAP catalytic core consists of 2 alpha, 1 beta, 1 beta' and 1 omega subunit. When a sigma factor is associated with the core the holoenzyme is formed, which can initiate transcription.

The enzyme catalyses RNA(n) + a ribonucleoside 5'-triphosphate = RNA(n+1) + diphosphate. In terms of biological role, DNA-dependent RNA polymerase catalyzes the transcription of DNA into RNA using the four ribonucleoside triphosphates as substrates. The chain is DNA-directed RNA polymerase subunit beta from Hyphomonas neptunium (strain ATCC 15444).